We begin with the raw amino-acid sequence, 560 residues long: Cytosolic purine 5'-nucleotidase (560 aa).

The active-site Nucleophile is the aspartate 52. Residues aspartate 52 and aspartate 54 each coordinate IMP. Residues aspartate 52 and aspartate 54 each contribute to the Mg(2+) site. Aspartate 54 acts as the Proton donor in catalysis. ATP-binding residues include arginine 144 and asparagine 154. IMP-binding residues include arginine 202, aspartate 206, lysine 215, threonine 249, asparagine 250, serine 251, and lysine 292. Mg(2+) is bound at residue aspartate 351. Serine 418 is modified (phosphoserine). Residues glutamine 453 and arginine 456 each coordinate ATP. 3 positions are modified to phosphoserine: serine 502, serine 511, and serine 527. A disordered region spans residues 541 to 560 (PQEITHCHDEDDDEEEEEEE). Residues 548–560 (HDEDDDEEEEEEE) are required for tetramer assembly. The segment covering 550–560 (EDDDEEEEEEE) has biased composition (acidic residues).

The protein belongs to the 5'(3')-deoxyribonucleotidase family. In terms of assembly, homotetramer. The cofactor is Mg(2+).

Its subcellular location is the cytoplasm. It is found in the cytosol. It catalyses the reaction a ribonucleoside 5'-phosphate + H2O = a ribonucleoside + phosphate. The enzyme catalyses a 2'-deoxyribonucleoside + a ribonucleoside 5'-phosphate = a ribonucleoside + a 2'-deoxyribonucleoside 5'-phosphate. It carries out the reaction IMP + H2O = inosine + phosphate. The catalysed reaction is GMP + H2O = guanosine + phosphate. It catalyses the reaction dGMP + H2O = 2'-deoxyguanosine + phosphate. The enzyme catalyses dIMP + H2O = 2'-deoxyinosine + phosphate. It carries out the reaction XMP + H2O = xanthosine + phosphate. The catalysed reaction is inosine + GMP = guanosine + IMP. It catalyses the reaction dGMP + inosine = 2'-deoxyguanosine + IMP. The enzyme catalyses dIMP + inosine = 2'-deoxyinosine + IMP. It carries out the reaction inosine + UMP = uridine + IMP. The catalysed reaction is inosine + CMP = cytidine + IMP. It catalyses the reaction inosine + AMP = IMP + adenosine. With respect to regulation, allosterically activated by various compounds including ATP, 2,3-BPG/2,3-Bisphosphoglyceric acid and Ap4A/P1,P4-bis(5'-adenosyl) tetraphosphate. Binding of an allosteric activator is a prerequisiste to magnesium and substrate binding. Inhibited by inorganic phosphate. Its function is as follows. Broad specificity cytosolic 5'-nucleotidase that catalyzes the dephosphorylation of 6-hydroxypurine nucleoside 5'-monophosphates. In addition, possesses a phosphotransferase activity by which it can transfer a phosphate from a donor nucleoside monophosphate to an acceptor nucleoside, preferably inosine, deoxyinosine and guanosine. Has the highest activities for IMP and GMP followed by dIMP, dGMP and XMP. Could also catalyze the transfer of phosphates from pyrimidine monophosphates but with lower efficiency. Through these activities regulates the purine nucleoside/nucleotide pools within the cell. The sequence is that of Cytosolic purine 5'-nucleotidase from Mus musculus (Mouse).